We begin with the raw amino-acid sequence, 455 residues long: Kynurenine 3-monooxygenase (455 aa).

It belongs to the aromatic-ring hydroxylase family. KMO subfamily. FAD is required as a cofactor.

The catalysed reaction is L-kynurenine + NADPH + O2 + H(+) = 3-hydroxy-L-kynurenine + NADP(+) + H2O. Its pathway is cofactor biosynthesis; NAD(+) biosynthesis; quinolinate from L-kynurenine: step 1/3. In terms of biological role, catalyzes the hydroxylation of L-kynurenine (L-Kyn) to form 3-hydroxy-L-kynurenine (L-3OHKyn). Required for synthesis of quinolinic acid. This Xanthomonas oryzae pv. oryzae (strain PXO99A) protein is Kynurenine 3-monooxygenase.